We begin with the raw amino-acid sequence, 287 residues long: Complement C1q-like protein 2 (287 aa).

Positions 1 to 21 are cleaved as a signal peptide; the sequence is MALGLLIAVPLLLQAAPPGAA. The interval 65–144 is disordered; that stretch reads LSANPPPPFI…GTGGGGDTEG (80 aa). The region spanning 76 to 118 is the Collagen-like domain; that stretch reads GPKGDPGRPGKPGPRGPPGEPGPPGPRGPPGEKGDSGRPGLPG. Over residues 84–104 the composition is skewed to pro residues; the sequence is PGKPGPRGPPGEPGPPGPRGP. Positions 127-141 are enriched in gly residues; it reads GGVGVVSGGTGGGGD. The C1q domain maps to 154–287; sequence FSGPKIAFYV…TFSGFLLYPD (134 aa).

As to quaternary structure, forms homotrimers which can further assemble to form higher-order oligomeric complexes. Interacts with ADGRB3. May interact with ERFE. Forms heterooligomers with C1QL3 and C1QL4, when proteins are coexpressed; this interaction does not occur after secretion. Glycosylated, but not with N-linked glycans. Highest expression in eye, followed by placenta and brain, intermediate expression in adipose tissue and lowest expression in lymph node and testis.

The protein localises to the secreted. Its function is as follows. May regulate the number of excitatory synapses that are formed on hippocampus neurons. Has no effect on inhibitory synapses. In Mus musculus (Mouse), this protein is Complement C1q-like protein 2 (C1ql2).